The chain runs to 163 residues: Beta-carbonic anhydrase 1 (163 aa).

Positions 35, 37, 88, and 91 each coordinate Zn(2+).

Belongs to the beta-class carbonic anhydrase family. As to quaternary structure, homotetramer. Zn(2+) serves as cofactor.

The catalysed reaction is hydrogencarbonate + H(+) = CO2 + H2O. In terms of biological role, catalyzes the reversible hydration of carbon dioxide to form bicarbonate. In Mycobacterium bovis (strain ATCC BAA-935 / AF2122/97), this protein is Beta-carbonic anhydrase 1.